The chain runs to 179 residues: Large ribosomal subunit protein uL22c (179 aa).

This sequence belongs to the universal ribosomal protein uL22 family. As to quaternary structure, part of the 50S ribosomal subunit.

The protein resides in the plastid. Its subcellular location is the chloroplast. In terms of biological role, this protein binds specifically to 23S rRNA. The globular domain of the protein is located near the polypeptide exit tunnel on the outside of the subunit, while an extended beta-hairpin is found that lines the wall of the exit tunnel in the center of the 70S ribosome. This is Large ribosomal subunit protein uL22c (rpl22) from Ranunculus macranthus (Large buttercup).